A 43-amino-acid chain; its full sequence is Protein PsbN (43 aa).

Residues 5–27 (TLFAISISCLLVSFTGYALYTAF) traverse the membrane as a helical segment.

The protein belongs to the PsbN family.

The protein resides in the plastid. It is found in the chloroplast thylakoid membrane. Its function is as follows. May play a role in photosystem I and II biogenesis. This chain is Protein PsbN, found in Thuja plicata (Western red-cedar).